Reading from the N-terminus, the 305-residue chain is MNMQEVYKYLSTVLPEGHVKQDEMLKNHTHIKVGGKADVFVAPTNYDEIQEVIKYANEYNIPVTFLGNGSNVIIKDGGIRGITVSLIHITGVTVTGTTIVAQCGAAIIDVSRIALDHNLTGLEFACGIPGSVGGALYMNAGAYGGEISFVLTEAVVMTGDGELRTLTKEAFEFGYRKSVFANNHYIILEARFELEEGVHEEIKAKMDDLTFKRESKQPLEYPSCGSVFKRPPNNFAGKLIQDSGLQGKRIGGVEVSLKHAGFMVNVDNGTAQDYIDLIHFVQKTVEEKFGVKLEREVRIIGEDKE.

The FAD-binding PCMH-type domain occupies 33-197 (VGGKADVFVA…LEARFELEEG (165 aa)). Residue Arg-176 is part of the active site. Residue Ser-226 is the Proton donor of the active site. The active site involves Glu-296.

The protein belongs to the MurB family. The cofactor is FAD.

Its subcellular location is the cytoplasm. The enzyme catalyses UDP-N-acetyl-alpha-D-muramate + NADP(+) = UDP-N-acetyl-3-O-(1-carboxyvinyl)-alpha-D-glucosamine + NADPH + H(+). The protein operates within cell wall biogenesis; peptidoglycan biosynthesis. In terms of biological role, cell wall formation. This is UDP-N-acetylenolpyruvoylglucosamine reductase 2 (murB2) from Bacillus cereus (strain ATCC 14579 / DSM 31 / CCUG 7414 / JCM 2152 / NBRC 15305 / NCIMB 9373 / NCTC 2599 / NRRL B-3711).